The primary structure comprises 638 residues: Chaperone protein DnaK (638 aa).

Thr-197 is modified (phosphothreonine; by autocatalysis). Residues 598-638 (QQSAPSGAAAGPDEGAPSGSGGTSGTRGGDDVIDAEFTETK) form a disordered region. Residues 615-624 (SGSGGTSGTR) show a composition bias toward gly residues. Over residues 628-638 (DVIDAEFTETK) the composition is skewed to acidic residues.

Belongs to the heat shock protein 70 family.

In terms of biological role, acts as a chaperone. The polypeptide is Chaperone protein DnaK (Gloeobacter violaceus (strain ATCC 29082 / PCC 7421)).